A 640-amino-acid polypeptide reads, in one-letter code: Threonine--tRNA ligase (640 aa).

Residues methionine 1–threonine 61 enclose the TGS domain. Positions aspartate 243–proline 534 are catalytic. Zn(2+) contacts are provided by cysteine 334, histidine 385, and histidine 511.

Belongs to the class-II aminoacyl-tRNA synthetase family. As to quaternary structure, homodimer. Zn(2+) serves as cofactor.

The protein localises to the cytoplasm. The enzyme catalyses tRNA(Thr) + L-threonine + ATP = L-threonyl-tRNA(Thr) + AMP + diphosphate + H(+). Its function is as follows. Catalyzes the attachment of threonine to tRNA(Thr) in a two-step reaction: L-threonine is first activated by ATP to form Thr-AMP and then transferred to the acceptor end of tRNA(Thr). Also edits incorrectly charged L-seryl-tRNA(Thr). The sequence is that of Threonine--tRNA ligase from Dichelobacter nodosus (strain VCS1703A).